The chain runs to 33 residues: Thrombin-like enzyme RP34 (33 aa).

A Peptidase S1 domain is found at 1 to 33 (VIGGDEXDINEHRSLALMYXSWSHRFIXXGXLI).

This sequence belongs to the peptidase S1 family. Snake venom subfamily. As to quaternary structure, homodimer. Expressed by the venom gland.

It is found in the secreted. The enzyme catalyses Selective cleavage of Arg-|-Xaa bond in fibrinogen, to form fibrin, and release fibrinopeptide A. The specificity of further degradation of fibrinogen varies with species origin of the enzyme.. Its function is as follows. Thrombin-like snake venom serine protease that displays clotting activity on fibrinogen. Shows both arginine-ester hydrolase and amidase activities on synthetic substrates. Also shows proteolytic activity toward casein. The chain is Thrombin-like enzyme RP34 from Cerastes cerastes (Horned desert viper).